The primary structure comprises 29 residues: Potassium channel toxin alpha-KTx 8.4 (29 aa).

3 disulfide bridges follow: cysteine 3–cysteine 19, cysteine 6–cysteine 24, and cysteine 10–cysteine 26.

The protein belongs to the short scorpion toxin superfamily. Potassium channel inhibitor family. Alpha-KTx 08 subfamily. As to expression, expressed by the venom gland.

Its subcellular location is the secreted. Its function is as follows. Inhibits voltage-gated potassium channels. The chain is Potassium channel toxin alpha-KTx 8.4 from Leiurus hebraeus (Hebrew deathstalker scorpion).